A 197-amino-acid polypeptide reads, in one-letter code: Adenylate kinase (197 aa).

Residue 19–24 (GSGKGT) coordinates ATP. The NMP stretch occupies residues 39 to 68 (SSGDLLRAEVQSGSPKGKELKAMMERGELV). AMP contacts are provided by residues S40, R45, 66–68 (ELV), 95–98 (RYPR), and Q102. The LID stretch occupies residues 132-142 (KRAETSNRVDD). R133 serves as a coordination point for ATP. Positions 139 and 150 each coordinate AMP. Residue G178 coordinates ATP.

This sequence belongs to the adenylate kinase family. As to quaternary structure, monomer.

Its subcellular location is the cytoplasm. It carries out the reaction AMP + ATP = 2 ADP. Its function is as follows. Catalyzes the reversible transfer of the terminal phosphate group between ATP and AMP. Plays an important role in cellular energy homeostasis and in adenine nucleotide metabolism. In Schistosoma mansoni (Blood fluke), this protein is Adenylate kinase.